The following is a 451-amino-acid chain: Trigger factor (451 aa).

One can recognise a PPIase FKBP-type domain in the interval 165–250; that stretch reads DDKLTIDFEG…LHQIQAREVL (86 aa).

The protein belongs to the FKBP-type PPIase family. Tig subfamily.

The protein resides in the cytoplasm. The enzyme catalyses [protein]-peptidylproline (omega=180) = [protein]-peptidylproline (omega=0). Its function is as follows. Involved in protein export. Acts as a chaperone by maintaining the newly synthesized protein in an open conformation. Functions as a peptidyl-prolyl cis-trans isomerase. This is Trigger factor from Helicobacter acinonychis (strain Sheeba).